Reading from the N-terminus, the 152-residue chain is Ubiquitin-conjugating enzyme E2 N (152 aa).

The region spanning 3–149 (GLPRRIIKET…ARAWTRLYAM (147 aa)) is the UBC core domain. The residue at position 82 (lysine 82) is an N6-acetyllysine. The Glycyl thioester intermediate role is filled by cysteine 87. A Glycyl lysine isopeptide (Lys-Gly) (interchain with G-Cter in ISG15) cross-link involves residue lysine 92.

This sequence belongs to the ubiquitin-conjugating enzyme family. As to quaternary structure, heterodimer with UBE2V2. Interacts (UBE2V2-UBE2N heterodimer) with the E3 ligase STUB1 (via the U-box domain); the complex has a specific 'Lys-63'-linked polyubiquitination activity. Interacts with RNF8 and RNF168. Interacts with RNF11. Interacts with the E3 ligases, HLTF and SHPRH; the interactions promote the 'Lys-63'-linked polyubiquitination of PCNA upon genotoxic stress and lead to DNA repair. Interacts with ARIH2 (via RING-type 2). Interacts with OTUB1; leading to inhibit E2-conjugating activity. Interacts with RIGI and RNF135; involved in RIGI ubiquitination and activation. Post-translationally, conjugation to ISG15 impairs formation of the thioester bond with ubiquitin but not interaction with UBE2V2.

The enzyme catalyses S-ubiquitinyl-[E1 ubiquitin-activating enzyme]-L-cysteine + [E2 ubiquitin-conjugating enzyme]-L-cysteine = [E1 ubiquitin-activating enzyme]-L-cysteine + S-ubiquitinyl-[E2 ubiquitin-conjugating enzyme]-L-cysteine.. It participates in protein modification; protein ubiquitination. Activity is inhibited by binding to OTUB1, which prevents 'Lys-63'-linked polyubiquitination. Its function is as follows. The UBE2V1-UBE2N and UBE2V2-UBE2N heterodimers catalyze the synthesis of non-canonical 'Lys-63'-linked polyubiquitin chains. This type of polyubiquitination does not lead to protein degradation by the proteasome. Mediates transcriptional activation of target genes. Plays a role in the control of progress through the cell cycle and differentiation. Plays a role in the error-free DNA repair pathway and contributes to the survival of cells after DNA damage. Acts together with the E3 ligases, HLTF and SHPRH, in the 'Lys-63'-linked poly-ubiquitination of PCNA upon genotoxic stress, which is required for DNA repair. Appears to act together with E3 ligase RNF5 in the 'Lys-63'-linked polyubiquitination of JKAMP thereby regulating JKAMP function by decreasing its association with components of the proteasome and ERAD. Promotes TRIM5 capsid-specific restriction activity and the UBE2V1-UBE2N heterodimer acts in concert with TRIM5 to generate 'Lys-63'-linked polyubiquitin chains which activate the MAP3K7/TAK1 complex which in turn results in the induction and expression of NF-kappa-B and MAPK-responsive inflammatory genes. Together with RNF135 and UB2V1, catalyzes the viral RNA-dependent 'Lys-63'-linked polyubiquitination of RIGI to activate the downstream signaling pathway that leads to interferon beta production. UBE2V1-UBE2N together with TRAF3IP2 E3 ubiquitin ligase mediate 'Lys-63'-linked polyubiquitination of TRAF6, a component of IL17A-mediated signaling pathway. This Macaca fascicularis (Crab-eating macaque) protein is Ubiquitin-conjugating enzyme E2 N (UBE2N).